The following is a 491-amino-acid chain: Zinc finger protein 655 (491 aa).

The tract at residues 1–52 is disordered; the sequence is MEEIPAQEAAGSPRVQFQSLETQSECLSPEPQFVQDTDMEQGLTGDGETREE. Polar residues predominate over residues 15 to 26; that stretch reads VQFQSLETQSEC. The residue at position 60 (glutamine 60) is a Phosphoserine. Glycyl lysine isopeptide (Lys-Gly) (interchain with G-Cter in SUMO2) cross-links involve residues lysine 77, lysine 190, and lysine 201. 6 consecutive C2H2-type zinc fingers follow at residues 212–234, 240–262, 303–325, 330–353, 380–402, and 408–430; these read YKCD…QRIH, YKCK…KRIH, YKCS…QKIH, CKCT…RVHH, YTCS…QRIH, and HECN…HKMH.

This sequence belongs to the krueppel C2H2-type zinc-finger protein family. Interacts with VAV1 and CDK4. Interacts with INTS13; promoting association with the integrator complex.

Its subcellular location is the nucleus. Functionally, probable transcription factor. In Homo sapiens (Human), this protein is Zinc finger protein 655.